Consider the following 1668-residue polypeptide: Kinesin-like protein KIF21B (1668 aa).

The Kinesin motor domain occupies 8–371 (CVKVAVRIRP…LKYANRARNI (364 aa)). 87–94 (GQTGAGKT) contacts ATP. Positions 372 to 465 (KNKVVVNQDK…LMSQEANLLL (94 aa)) form a coiled coil. An interaction with TRIM3 region spans residues 401–1100 (MEYKAGKRVI…LQALIYNVQH (700 aa)). Disordered regions lie at residues 553–629 (KKKE…PEEK) and 837–866 (RVGLKPPNMDSGAEVSASTTSSEAESGARS). Positions 579 to 628 (NSEETDENEAEEEEEERDESGCEEEEGREDEDEDSGSEESLVDSDSDPEE) are enriched in acidic residues. Ser580 is modified (phosphoserine). Thr583 is subject to Phosphothreonine. Low complexity predominate over residues 847 to 866 (SGAEVSASTTSSEAESGARS). Residues 924 to 1019 (IIDIVMQRMT…TKEELDSTDT (96 aa)) adopt a coiled-coil conformation. Phosphoserine occurs at positions 1150, 1168, and 1217. A compositionally biased stretch (polar residues) spans 1199-1219 (LPTRGSTFPRQSRGATDTSPL). Residues 1199 to 1253 (LPTRGSTFPRQSRGATDTSPLTRRKSYDRGQPIRSTDMGFTPPSSPPTRPRNDRN) form a disordered region. The residue at position 1239 (Thr1239) is a Phosphothreonine. A Phosphoserine modification is found at Ser1243. 7 WD repeats span residues 1308 to 1345 (GHTKPILCLDATDELLFTGSKDRSCKMWNLVTGQEIAA), 1348 to 1386 (GHPNNVVSIKYCSHSGLVFSVSSSYIKVWDIRDSAKCIR), 1412 to 1450 (QGEHQINQMALSPSGSMLYVASGNAVRIWELNRFQPIGK), 1453 to 1495 (GHIG…TGTI), 1504 to 1541 (PHYDGIECLAIQGDILFSGSRDNGIKKWDLDQQELIQQ), 1545 to 1584 (AHKDWVCALAFVPGRPMLLSACRAGFIKVWNVDNFTPIGE), and 1587 to 1624 (GHDSPINAICTNSKHIFTASSDCRVKLWNYVPGLTPCL).

Belongs to the TRAFAC class myosin-kinesin ATPase superfamily. Kinesin family. In terms of assembly, interacts with TRIM3; the interaction positively affects motility of KIF21B. Interacts with GABARAP and GABA(A) receptor subunits: GABRG2, GABRA1 and GABRA2. May interact with GABA(A) receptor subunits: GABRB2 and GABRB3. Expressed in brain (at protein level). Expressed in spleen and at lower levels in testes.

The protein localises to the cytoplasm. It localises to the cytoskeleton. It is found in the cell projection. Its subcellular location is the dendrite. The protein resides in the growth cone. The protein localises to the axon. It localises to the cytoplasmic vesicle. Its function is as follows. Plus-end directed microtubule-dependent motor protein which displays processive activity. Is involved in regulation of microtubule dynamics, synapse function and neuronal morphology, including dendritic tree branching and spine formation. Plays a role in lerning and memory. Involved in delivery of gamma-aminobutyric acid (GABA(A)) receptor to cell surface. In Mus musculus (Mouse), this protein is Kinesin-like protein KIF21B (Kif21b).